The sequence spans 435 residues: Transcriptional enhancer factor TEF-5 (435 aa).

The span at methionine 1–proline 12 shows a compositional bias: polar residues. The interval methionine 1–valine 34 is disordered. N-acetylalanine is present on alanine 2. Positions glutamate 14 to aspartate 28 are enriched in basic and acidic residues. The TEA DNA-binding region spans aspartate 28–glutamate 104. Serine 148 carries the post-translational modification Phosphoserine. The segment at glycine 173–aspartate 435 is transcriptional activation.

Interacts with YAP1 and WWTR1/TAZ. Preferentially expressed in the placenta.

Its subcellular location is the nucleus. Transcription factor which plays a key role in the Hippo signaling pathway, a pathway involved in organ size control and tumor suppression by restricting proliferation and promoting apoptosis. The core of this pathway is composed of a kinase cascade wherein MST1/MST2, in complex with its regulatory protein SAV1, phosphorylates and activates LATS1/2 in complex with its regulatory protein MOB1, which in turn phosphorylates and inactivates YAP1 oncoprotein and WWTR1/TAZ. Acts by mediating gene expression of YAP1 and WWTR1/TAZ, thereby regulating cell proliferation, migration and epithelial mesenchymal transition (EMT) induction. Binds to multiple functional elements of the human chorionic somatomammotropin-B gene enhancer. The sequence is that of Transcriptional enhancer factor TEF-5 (TEAD3) from Homo sapiens (Human).